A 202-amino-acid chain; its full sequence is Lymphotoxin-alpha (202 aa).

Residues 1–33 (MTPLGRLHLLRVLSTPPVFLLGLLLALPLGAQG) form the signal peptide. The 143-residue stretch at 60–202 (PAAHLVGYPS…STVFFGAFAL (143 aa)) folds into the THD domain. Residue N93 is glycosylated (N-linked (GlcNAc...) asparagine).

It belongs to the tumor necrosis factor family. Homotrimer, and heterotrimer of either two LTB and one LTA subunits or (less prevalent) two LTA and one LTB subunits. Interacts with TNFRSF14.

The protein resides in the secreted. It localises to the membrane. Functionally, cytokine that in its homotrimeric form binds to TNFRSF1A/TNFR1, TNFRSF1B/TNFBR and TNFRSF14/HVEM. In its heterotrimeric form with LTB binds to TNFRSF3/LTBR. Lymphotoxin is produced by lymphocytes and is cytotoxic for a wide range of tumor cells in vitro and in vivo. The protein is Lymphotoxin-alpha (Lta) of Rattus norvegicus (Rat).